Consider the following 357-residue polypeptide: Uroporphyrinogen decarboxylase (357 aa).

Substrate contacts are provided by residues 27 to 31 (RQAGR), Asp-77, Tyr-154, Ser-209, and His-330.

The protein belongs to the uroporphyrinogen decarboxylase family. Homodimer.

It is found in the cytoplasm. It carries out the reaction uroporphyrinogen III + 4 H(+) = coproporphyrinogen III + 4 CO2. It functions in the pathway porphyrin-containing compound metabolism; protoporphyrin-IX biosynthesis; coproporphyrinogen-III from 5-aminolevulinate: step 4/4. In terms of biological role, catalyzes the decarboxylation of four acetate groups of uroporphyrinogen-III to yield coproporphyrinogen-III. This chain is Uroporphyrinogen decarboxylase, found in Acinetobacter baumannii (strain AB0057).